A 443-amino-acid polypeptide reads, in one-letter code: Maintenance of mitochondrial morphology protein 1 (443 aa).

Residues 1–80 (MADLETSDLS…PSNTWSFTQG (80 aa)) are Lumenal-facing. Residues 81–101 (LIVGQLSVVFVIVIFIKFFVF) form a helical membrane-spanning segment. Residues 102 to 443 (AESSPALAKS…NGDKVEDGSN (342 aa)) lie on the Cytoplasmic side of the membrane. Disordered regions lie at residues 126 to 146 (KKDQ…TTAS) and 304 to 358 (LSAH…NDGT). Residues 131 to 142 (SSDDADPDDDSE) are compositionally biased toward acidic residues. The SMP-LTD domain occupies 165–417 (SPESLDWFNV…EPRFQVVRLP (253 aa)).

This sequence belongs to the MMM1 family. As to quaternary structure, homodimer. Component of the ER-mitochondria encounter structure (ERMES) or MDM complex, composed of MMM1, MDM10, MDM12 and MDM34. An MMM1 homodimer associates with one molecule of MDM12 on each side in a pairwise head-to-tail manner, and the SMP-LTD domains of MMM1 and MDM12 generate a continuous hydrophobic tunnel for phospholipid trafficking.

It is found in the endoplasmic reticulum membrane. In terms of biological role, component of the ERMES/MDM complex, which serves as a molecular tether to connect the endoplasmic reticulum (ER) and mitochondria. Components of this complex are involved in the control of mitochondrial shape and protein biogenesis, and function in nonvesicular lipid trafficking between the ER and mitochondria. The MDM12-MMM1 subcomplex functions in the major beta-barrel assembly pathway that is responsible for biogenesis of all outer membrane beta-barrel proteins, and acts in a late step after the SAM complex. The MDM10-MDM12-MMM1 subcomplex further acts in the TOM40-specific pathway after the action of the MDM12-MMM1 complex. Essential for establishing and maintaining the structure of mitochondria and maintenance of mtDNA nucleoids. This is Maintenance of mitochondrial morphology protein 1 from Scheffersomyces stipitis (strain ATCC 58785 / CBS 6054 / NBRC 10063 / NRRL Y-11545) (Yeast).